We begin with the raw amino-acid sequence, 138 residues long: UPF0251 protein Dole_1957 (138 aa).

This sequence belongs to the UPF0251 family.

This Desulfosudis oleivorans (strain DSM 6200 / JCM 39069 / Hxd3) (Desulfococcus oleovorans) protein is UPF0251 protein Dole_1957.